Here is a 241-residue protein sequence, read N- to C-terminus: DNA repair protein RecO (241 aa).

It belongs to the RecO family.

Involved in DNA repair and RecF pathway recombination. The polypeptide is DNA repair protein RecO (Rickettsia canadensis (strain McKiel)).